Reading from the N-terminus, the 501-residue chain is Pyruvate kinase (501 aa).

Arginine 50 contributes to the substrate binding site. 4 residues coordinate K(+): asparagine 52, serine 54, aspartate 85, and threonine 86. 52 to 55 contributes to the ATP binding site; sequence NFSH. Arginine 92 and lysine 178 together coordinate ATP. Glutamate 243 is a Mg(2+) binding site. 3 residues coordinate substrate: glycine 266, aspartate 267, and threonine 299. Aspartate 267 is a binding site for Mg(2+).

Belongs to the pyruvate kinase family. As to quaternary structure, homotetramer. It depends on Mg(2+) as a cofactor. K(+) serves as cofactor.

The catalysed reaction is pyruvate + ATP = phosphoenolpyruvate + ADP + H(+). It functions in the pathway carbohydrate degradation; glycolysis; pyruvate from D-glyceraldehyde 3-phosphate: step 5/5. The chain is Pyruvate kinase (PYK1) from Naumovozyma castellii (Yeast).